Consider the following 145-residue polypeptide: 3-dehydroquinate dehydratase (145 aa).

The Proton acceptor role is filled by Y24. Positions 75, 81, and 88 each coordinate substrate. H101 acts as the Proton donor in catalysis. Residues 102–103 (LS) and R112 each bind substrate.

This sequence belongs to the type-II 3-dehydroquinase family. In terms of assembly, homododecamer.

The catalysed reaction is 3-dehydroquinate = 3-dehydroshikimate + H2O. The protein operates within metabolic intermediate biosynthesis; chorismate biosynthesis; chorismate from D-erythrose 4-phosphate and phosphoenolpyruvate: step 3/7. Its function is as follows. Catalyzes a trans-dehydration via an enolate intermediate. This Phenylobacterium zucineum (strain HLK1) protein is 3-dehydroquinate dehydratase.